Consider the following 27-residue polypeptide: Allergen C-C (27 aa).

It belongs to the protease inhibitor I6 (cereal trypsin/alpha-amylase inhibitor) family.

It localises to the secreted. The sequence is that of Allergen C-C from Triticum aestivum (Wheat).